A 245-amino-acid chain; its full sequence is Ribonuclease 3 (245 aa).

One can recognise an RNase III domain in the interval 19–148 (FKLFQEKIGI…FIGALYLDQG (130 aa)). Position 61 (Glu-61) interacts with Mg(2+). Asp-65 is a catalytic residue. Mg(2+)-binding residues include Asp-134 and Glu-137. Glu-137 is a catalytic residue. Residues 174–243 (DYKSQLQELI…AAEALKKLKE (70 aa)) enclose the DRBM domain.

The protein belongs to the ribonuclease III family. In terms of assembly, homodimer. The cofactor is Mg(2+).

Its subcellular location is the cytoplasm. It carries out the reaction Endonucleolytic cleavage to 5'-phosphomonoester.. Its function is as follows. Digests double-stranded RNA. Involved in the processing of primary rRNA transcript to yield the immediate precursors to the large and small rRNAs (23S and 16S). Processes some mRNAs, and tRNAs when they are encoded in the rRNA operon. Processes pre-crRNA and tracrRNA of type II CRISPR loci if present in the organism. The protein is Ribonuclease 3 of Bacillus cereus (strain 03BB102).